We begin with the raw amino-acid sequence, 77 residues long: Small VCP/p97-interacting protein (77 aa).

2 disordered regions span residues 1 to 20 (MGLC…DLEE) and 25 to 77 (LAEA…WTVS). A lipid anchor (N-myristoyl glycine) is attached at Gly2. S-palmitoyl cysteine attachment occurs at residues Cys4 and Cys7. Residues 21-33 (KRAKLAEAAERRQ) form a VCP/p97-interacting motif (VIM) region. Positions 25–37 (LAEAAERRQKEAA) are enriched in basic and acidic residues. Ser46 carries the post-translational modification Phosphoserine.

Belongs to the SVIP family. As to quaternary structure, interacts (via VIM motif) with VCP/p97. Forms a complex with VCP/p97 and DERL1.

It localises to the membrane. Its subcellular location is the smooth endoplasmic reticulum membrane. It is found in the golgi apparatus membrane. The protein localises to the cell membrane. The protein resides in the lysosome membrane. In terms of biological role, negative regulator of the ER-associated degradation pathway (ERAD) of misfolded proteins. It competes with AMFR/gp78 for binding VCP/p97, and inhibits AMFR/gp78-VCP/p97 complex formation that is required for degradation of ERAD substrates. Involved in the regulation of adrenal cortisol and dehydroepiandrosterone (DHEA) biosynthesis. The protein is Small VCP/p97-interacting protein (SVIP) of Homo sapiens (Human).